A 981-amino-acid polypeptide reads, in one-letter code: Probable NAD kinase 2, chloroplastic (981 aa).

Residues 319-364 (APSAEQVQRFAEIVSDSAKKPIYLHSQEGISRTSAMVSRWKQYVTR) form a calmodulin-binding region. Disordered stretches follow at residues 369 to 413 (ATQN…DRTM) and 551 to 601 (TNGK…AERN). Polar residues-rich tracts occupy residues 387–406 (TEQL…NGTP), 551–563 (TNGK…ASTS), and 581–596 (SDTS…GSQK).

It belongs to the NAD kinase family.

It is found in the plastid. It localises to the chloroplast. It catalyses the reaction NAD(+) + ATP = ADP + NADP(+) + H(+). In terms of biological role, involved in chlorophyll synthesis and chloroplast protection against oxidative damage. In Oryza sativa subsp. japonica (Rice), this protein is Probable NAD kinase 2, chloroplastic.